Reading from the N-terminus, the 297-residue chain is Myozenin-1 (297 aa).

The tract at residues 1–34 is disordered; the sequence is MPLSGTPAPNKKRKSSKLIMELTGGGQESSGLNL. A Phosphoserine modification is found at serine 82. Residues 105-172 form a disordered region; sequence FSYSKSSGGG…ALPDNQAGGE (68 aa). Low complexity predominate over residues 118-128; it reads RSGSAGQYGSD. Gly residues predominate over residues 136 to 162; it reads SGSGSGSGSGPGSGGAGGPGGHSGRGG.

It belongs to the myozenin family. In terms of assembly, interacts with ACTN2, ACTN3, FLNA, FLNB, FLNC, LDB3, PPP3CA and TCAP. Interacts via its C-terminal region with MYOT.

It is found in the nucleus. Its subcellular location is the cell projection. It localises to the pseudopodium. Functionally, myozenins may serve as intracellular binding proteins involved in linking Z-disk proteins such as alpha-actinin, gamma-filamin, TCAP/telethonin, LDB3/ZASP and localizing calcineurin signaling to the sarcomere. Plays an important role in the modulation of calcineurin signaling. May play a role in myofibrillogenesis. In Bos taurus (Bovine), this protein is Myozenin-1 (MYOZ1).